The primary structure comprises 151 residues: Succinate dehydrogenase subunit 4, mitochondrial (151 aa).

A mitochondrion-targeting transit peptide spans 1 to 78 (MSLRRTILDL…RSISSSIGQS (78 aa)). Heme is bound at residue His-109. Residue Tyr-121 coordinates a ubiquinone. A helical transmembrane segment spans residues 130 to 150 (LIVMSLGLFQIIVLKDIILFL).

As to quaternary structure, component of complex II composed of eight subunits in plants: four classical SDH subunits SDH1, SDH2, SDH3 and SDH4 (a flavoprotein (FP), an iron-sulfur protein (IP), and a cytochrome b composed of a large and a small subunit.), as well as four subunits unknown in mitochondria from bacteria and heterotrophic eukaryotes. Heme is required as a cofactor. As to expression, expressed in flowers, inflorescences and stems.

Its subcellular location is the mitochondrion inner membrane. It participates in carbohydrate metabolism; tricarboxylic acid cycle. Functionally, membrane-anchoring subunit of succinate dehydrogenase (SDH). The chain is Succinate dehydrogenase subunit 4, mitochondrial from Arabidopsis thaliana (Mouse-ear cress).